Reading from the N-terminus, the 446-residue chain is Signal recognition particle protein (446 aa).

GTP contacts are provided by residues 106-113 (GLQGSGKT), 188-192 (DTAGR), and 246-249 (SKLD).

This sequence belongs to the GTP-binding SRP family. SRP54 subfamily. As to quaternary structure, part of the signal recognition particle protein translocation system, which is composed of SRP and FtsY.

It localises to the cytoplasm. The enzyme catalyses GTP + H2O = GDP + phosphate + H(+). Functionally, involved in targeting and insertion of nascent membrane proteins into the cytoplasmic membrane. Binds to the hydrophobic signal sequence of the ribosome-nascent chain (RNC) as it emerges from the ribosomes. The SRP-RNC complex is then targeted to the cytoplasmic membrane where it interacts with the SRP receptor FtsY. The polypeptide is Signal recognition particle protein (Mycoplasma genitalium (strain ATCC 33530 / DSM 19775 / NCTC 10195 / G37) (Mycoplasmoides genitalium)).